The sequence spans 231 residues: Large ribosomal subunit protein uL1 (231 aa).

It belongs to the universal ribosomal protein uL1 family. As to quaternary structure, part of the 50S ribosomal subunit.

Binds directly to 23S rRNA. The L1 stalk is quite mobile in the ribosome, and is involved in E site tRNA release. Its function is as follows. Protein L1 is also a translational repressor protein, it controls the translation of the L11 operon by binding to its mRNA. This chain is Large ribosomal subunit protein uL1, found in Pseudomonas aeruginosa (strain LESB58).